Here is a 241-residue protein sequence, read N- to C-terminus: Ribonuclease PH (241 aa).

Phosphate-binding positions include arginine 89 and 127–129 (GTR).

Belongs to the RNase PH family. As to quaternary structure, homohexameric ring arranged as a trimer of dimers.

The catalysed reaction is tRNA(n+1) + phosphate = tRNA(n) + a ribonucleoside 5'-diphosphate. In terms of biological role, phosphorolytic 3'-5' exoribonuclease that plays an important role in tRNA 3'-end maturation. Removes nucleotide residues following the 3'-CCA terminus of tRNAs; can also add nucleotides to the ends of RNA molecules by using nucleoside diphosphates as substrates, but this may not be physiologically important. Probably plays a role in initiation of 16S rRNA degradation (leading to ribosome degradation) during starvation. This chain is Ribonuclease PH, found in Xanthomonas euvesicatoria pv. vesicatoria (strain 85-10) (Xanthomonas campestris pv. vesicatoria).